The primary structure comprises 356 residues: UDP-N-acetylglucosamine--N-acetylmuramyl-(pentapeptide) pyrophosphoryl-undecaprenol N-acetylglucosamine transferase (356 aa).

UDP-N-acetyl-alpha-D-glucosamine contacts are provided by residues 12-14 (TAG), arginine 166, serine 196, and glutamine 291.

It belongs to the glycosyltransferase 28 family. MurG subfamily.

It localises to the cell membrane. The enzyme catalyses di-trans,octa-cis-undecaprenyl diphospho-N-acetyl-alpha-D-muramoyl-L-alanyl-D-glutamyl-meso-2,6-diaminopimeloyl-D-alanyl-D-alanine + UDP-N-acetyl-alpha-D-glucosamine = di-trans,octa-cis-undecaprenyl diphospho-[N-acetyl-alpha-D-glucosaminyl-(1-&gt;4)]-N-acetyl-alpha-D-muramoyl-L-alanyl-D-glutamyl-meso-2,6-diaminopimeloyl-D-alanyl-D-alanine + UDP + H(+). The protein operates within cell wall biogenesis; peptidoglycan biosynthesis. Functionally, cell wall formation. Catalyzes the transfer of a GlcNAc subunit on undecaprenyl-pyrophosphoryl-MurNAc-pentapeptide (lipid intermediate I) to form undecaprenyl-pyrophosphoryl-MurNAc-(pentapeptide)GlcNAc (lipid intermediate II). The chain is UDP-N-acetylglucosamine--N-acetylmuramyl-(pentapeptide) pyrophosphoryl-undecaprenol N-acetylglucosamine transferase from Geobacillus thermodenitrificans (strain NG80-2).